We begin with the raw amino-acid sequence, 220 residues long: Translation initiation factor 6 (220 aa).

It belongs to the eIF-6 family.

Its function is as follows. Binds to the 50S ribosomal subunit and prevents its association with the 30S ribosomal subunit to form the 70S initiation complex. In Methanoculleus marisnigri (strain ATCC 35101 / DSM 1498 / JR1), this protein is Translation initiation factor 6.